We begin with the raw amino-acid sequence, 205 residues long: Sarcosine oxidase subunit gamma (205 aa).

The protein belongs to the SoxG family. As to quaternary structure, heterotetramer composed of subunits alpha (SoxA), beta (SoxB), gamma (SoxG) and delta (SoxD).

Its subcellular location is the cytoplasm. It catalyses the reaction sarcosine + (6S)-5,6,7,8-tetrahydrofolate + O2 = (6R)-5,10-methylene-5,6,7,8-tetrahydrofolate + glycine + H2O2. The catalysed reaction is sarcosine + O2 + H2O = formaldehyde + glycine + H2O2. Its activity is regulated as follows. Inhibited by Zn(2+), Cu(2+), Cd(2+), Hg(2+), Ag(+), p-chloromercuribenzoate (p-CMB), iodoacetamide, N-ethylmaleimide, CN(-), o-phenanthroline and sodium lauryl sulfate. Functionally, in the presence of tetrahydrofolate, catalyzes the oxidative demethylation of sarcosine to yield glycine, 5,10-methylenetetrahydrofolate and hydrogen peroxide. In the absence of tetrahydrofolate, catalyzes the oxidative demethylation of sarcosine to yield glycine, formaldehyde and hydrogen peroxide. Can also use N-methyl-L-alanine and N-ethyl-L-glycine. Is very specific for oxygen as an acceptor. This chain is Sarcosine oxidase subunit gamma, found in Corynebacterium sp. (strain U-96).